The following is a 355-amino-acid chain: Putative L-lysine 2,3-aminomutase (355 aa).

The Radical SAM core domain occupies 93-308; sequence VHQYANRVLM…KERLSGLSLP (216 aa). Positions 108, 112, and 115 each coordinate [4Fe-4S] cluster. K320 is modified (N6-(pyridoxal phosphate)lysine).

This sequence belongs to the radical SAM superfamily. KamA family. The cofactor is [4Fe-4S] cluster. Pyridoxal 5'-phosphate is required as a cofactor.

The sequence is that of Putative L-lysine 2,3-aminomutase from Treponema pallidum (strain Nichols).